The primary structure comprises 1457 residues: NBPF family member NBPF12 (1457 aa).

A coiled-coil region spans residues 75–119; that stretch reads RQFKEEKLAEQLKQAEELRQYKVLVHSQERELTQLREKLREGRDA. The segment at 162–200 is disordered; that stretch reads LSPENDEDEDEDVQVEEDEKVLESSAPREVQKAEESKVP. The span at 165-181 shows a compositional bias: acidic residues; it reads ENDEDEDEDVQVEEDEK. One can recognise an Olduvai 1 domain in the interval 165 to 259; the sequence is ENDEDEDEDV…ECQDALNILP (95 aa). Residues 190–200 show a composition bias toward basic and acidic residues; the sequence is EVQKAEESKVP. Residues 339–390 adopt a coiled-coil conformation; that stretch reads KSMLRNELQFKEEKLAEQLKQAEELRQYKVLVHSQERELTQLREKLREGRDA. The segment at 432 to 472 is disordered; it reads KLSPENDEDEDEDVQVEEDEKVLESSSPREMQKAEESKVPE. The segment covering 436 to 452 has biased composition (acidic residues); the sequence is ENDEDEDEDVQVEEDEK. Residues 436 to 530 enclose the Olduvai 2 domain; it reads ENDEDEDEDV…ECQDALNILP (95 aa). The span at 461–472 shows a compositional bias: basic and acidic residues; it reads EMQKAEESKVPE. Residues 610 to 661 adopt a coiled-coil conformation; that stretch reads KSMLRNELQFKEEKLAEQLKQAEELRQYKVLVHSQERELTQLREKLREGRDA. Olduvai domains follow at residues 707-799, 800-871, 872-963, 966-1021, 1022-1114, 1115-1207, 1210-1265, 1266-1358, and 1359-1457; these read ENDN…HIIP, ENES…VDIG, RHRW…PSCP, SREL…LDVD, RIKK…RSKK, KRRR…PSCP, and KRRR…IFPQ. 2 disordered regions span residues 721 to 746 and 791 to 838; these read AEKVQKSSSPREMQKAEEKEVPEDSL and WEDA…GYST. Acidic residues-rich tracts occupy residues 801 to 810 and 821 to 833; these read NESDDEEEEE and ESEEEEVPQESWD. The tract at residues 1100-1139 is disordered; sequence KKGKGKKRRGRRSKKKRRRGRKEGEEDQNPPCPRLSRELL. The span at 1102-1120 shows a compositional bias: basic residues; it reads GKGKKRRGRRSKKKRRRGR. The interval 1344–1378 is disordered; it reads KKGKGKKRRGRRSKKKRRRGRKEGEEDQNPPCPRL. The span at 1346 to 1364 shows a compositional bias: basic residues; it reads GKGKKRRGRRSKKKRRRGR.

This sequence belongs to the NBPF family. As to expression, widely expressed with highest levels in brain, ovary, mammary gland, skin and adipose tissue. Also expressed in testis. Detected in a number of tumors including osteosarcoma, mammary carcinoma and hepatocellular carcinoma.

The protein resides in the cytoplasm. The protein is NBPF family member NBPF12 of Homo sapiens (Human).